Reading from the N-terminus, the 214-residue chain is Octanoyltransferase (214 aa).

Residues K31–Y206 form the BPL/LPL catalytic domain. Substrate is bound by residues R70 to H77, S137 to G139, and G150 to A152. Catalysis depends on C168, which acts as the Acyl-thioester intermediate.

This sequence belongs to the LipB family.

It localises to the cytoplasm. The enzyme catalyses octanoyl-[ACP] + L-lysyl-[protein] = N(6)-octanoyl-L-lysyl-[protein] + holo-[ACP] + H(+). It functions in the pathway protein modification; protein lipoylation via endogenous pathway; protein N(6)-(lipoyl)lysine from octanoyl-[acyl-carrier-protein]: step 1/2. Its function is as follows. Catalyzes the transfer of endogenously produced octanoic acid from octanoyl-acyl-carrier-protein onto the lipoyl domains of lipoate-dependent enzymes. Lipoyl-ACP can also act as a substrate although octanoyl-ACP is likely to be the physiological substrate. This Marinomonas sp. (strain MWYL1) protein is Octanoyltransferase.